Reading from the N-terminus, the 168-residue chain is Crossover junction endodeoxyribonuclease RuvC (168 aa).

Active-site residues include aspartate 9, glutamate 70, and aspartate 145. Mg(2+)-binding residues include aspartate 9, glutamate 70, and aspartate 145.

This sequence belongs to the RuvC family. As to quaternary structure, homodimer which binds Holliday junction (HJ) DNA. The HJ becomes 2-fold symmetrical on binding to RuvC with unstacked arms; it has a different conformation from HJ DNA in complex with RuvA. In the full resolvosome a probable DNA-RuvA(4)-RuvB(12)-RuvC(2) complex forms which resolves the HJ. Mg(2+) serves as cofactor.

The protein localises to the cytoplasm. The catalysed reaction is Endonucleolytic cleavage at a junction such as a reciprocal single-stranded crossover between two homologous DNA duplexes (Holliday junction).. The RuvA-RuvB-RuvC complex processes Holliday junction (HJ) DNA during genetic recombination and DNA repair. Endonuclease that resolves HJ intermediates. Cleaves cruciform DNA by making single-stranded nicks across the HJ at symmetrical positions within the homologous arms, yielding a 5'-phosphate and a 3'-hydroxyl group; requires a central core of homology in the junction. The consensus cleavage sequence is 5'-(A/T)TT(C/G)-3'. Cleavage occurs on the 3'-side of the TT dinucleotide at the point of strand exchange. HJ branch migration catalyzed by RuvA-RuvB allows RuvC to scan DNA until it finds its consensus sequence, where it cleaves and resolves the cruciform DNA. In Chlamydia felis (strain Fe/C-56) (Chlamydophila felis), this protein is Crossover junction endodeoxyribonuclease RuvC.